Here is a 225-residue protein sequence, read N- to C-terminus: Superantigen-like protein 11 (225 aa).

The N-terminal stretch at 1–30 is a signal peptide; sequence MKLKNIAKASLALGILTTGMITTTAQPVKA. The interval 94–196 is sialyl Lewis X-binding; it reads VDIFVVRENS…RITMKDGGFY (103 aa).

The protein belongs to the staphylococcal/streptococcal toxin family. In terms of assembly, homodimer (via its C-terminal domain). Interacts with host FCAR and SELPLG (via sialyl Lewis X).

Its subcellular location is the secreted. Secreted protein that plays a role in the inhibition of host immune system. Targets myeloid cells such as monocytes or granulocytes through binding with sialyllactosamine-containing glycoproteins. Prevents initial rolling of neutrophils toward the site of infection by interacting with host SELPLG. Disrupts neutrophil motility by induction of cell adhesion via interacting with glycans but independently of SELPLG. The sequence is that of Superantigen-like protein 11 from Staphylococcus aureus (strain Newman).